The primary structure comprises 209 residues: Ribosomal RNA large subunit methyltransferase E (209 aa).

Residues Gly-63, Trp-65, Asp-83, Asp-99, and Asp-124 each coordinate S-adenosyl-L-methionine. Lys-164 acts as the Proton acceptor in catalysis.

This sequence belongs to the class I-like SAM-binding methyltransferase superfamily. RNA methyltransferase RlmE family.

It localises to the cytoplasm. It carries out the reaction uridine(2552) in 23S rRNA + S-adenosyl-L-methionine = 2'-O-methyluridine(2552) in 23S rRNA + S-adenosyl-L-homocysteine + H(+). Specifically methylates the uridine in position 2552 of 23S rRNA at the 2'-O position of the ribose in the fully assembled 50S ribosomal subunit. This is Ribosomal RNA large subunit methyltransferase E from Vibrio vulnificus (strain CMCP6).